We begin with the raw amino-acid sequence, 150 residues long: Transcription antitermination protein NusB (150 aa).

This sequence belongs to the NusB family.

Involved in transcription antitermination. Required for transcription of ribosomal RNA (rRNA) genes. Binds specifically to the boxA antiterminator sequence of the ribosomal RNA (rrn) operons. This chain is Transcription antitermination protein NusB, found in Streptococcus pyogenes serotype M6 (strain ATCC BAA-946 / MGAS10394).